Reading from the N-terminus, the 2603-residue chain is Squalestatin tetraketide synthase (2603 aa).

The region spanning 29 to 455 (TIPIAIIGMS…GANAHVILES (427 aa)) is the Ketosynthase family 3 (KS3) domain. Active-site for beta-ketoacyl synthase activity residues include Cys-202, His-337, and His-377. The interval 463–512 (IANGSGRSNGTGNGHNGANGTTNGHNGTNGTTNGHFDATQATNGHYGTDE) is disordered. Over residues 469-479 (RSNGTGNGHNG) the composition is skewed to gly residues. A compositionally biased stretch (low complexity) spans 480–497 (ANGTTNGHNGTNGTTNGH). Residues 608 to 931 (VFTGQGAQWF…PYISCLLRGQ (324 aa)) are malonyl-CoA:ACP transacylase (MAT) domain. The tract at residues 1000–1138 (HDLLGSLIVG…GRITIEFDTS (139 aa)) is N-terminal hotdog fold. The region spanning 1000–1314 (HDLLGSLIVG…NQSVGQMAPQ (315 aa)) is the PKS/mFAS DH domain. Residues 1000–1314 (HDLLGSLIVG…NQSVGQMAPQ (315 aa)) form a dehydratase (DH) domain region. His-1032 acts as the Proton acceptor; for dehydratase activity in catalysis. The tract at residues 1157–1314 (LMRSVDPSNL…NQSVGQMAPQ (158 aa)) is C-terminal hotdog fold. The Proton donor; for dehydratase activity role is filled by Asp-1223. A methyltransferase (CMet) domain region spans residues 1465–1665 (LYRYYTDAIK…GLDIELRDCD (201 aa)). The enoyl reductase (ER) (ER) domain stretch occupies residues 1892–2205 (GLIDTLQFSK…AGKHMGKIVI (314 aa)). Positions 2228–2406 (ASYLIVGGLG…AVSIDLGMVQ (179 aa)) are ketoreductase (KR) domain. In terms of domain architecture, Carrier spans 2516–2593 (EAIDVVGRAI…ALATTVATKS (78 aa)). Ser-2553 is modified (O-(pantetheine 4'-phosphoryl)serine).

Its pathway is secondary metabolite biosynthesis. In terms of biological role, highly reducing polyketide synthase (HR-PKS); part of the gene cluster that mediates the biosynthesis of squalestatin S1 (SQS1, also known as zaragozic acid A), a lead compound for the treatment of hyper-cholesterolemia by targeting squalene synthase (SS). Pks1 is responsible for the biosynthesis of the tetraketide sidechain of SQS1. The biosynthesis must involve 3 rounds of chain extension. After the first and second rounds methyl-transfer occurs, and in all rounds of extension the ketoreductase and dehydratase are active. The enoyl reductase and C-MeT are not active in the final round of extension. This is Squalestatin tetraketide synthase from Phoma sp. (strain C2932).